A 157-amino-acid polypeptide reads, in one-letter code: DNA gyrase inhibitor (157 aa).

The protein belongs to the DNA gyrase inhibitor family. In terms of assembly, interacts with DNA gyrase.

It localises to the cytoplasm. Inhibits the supercoiling activity of DNA gyrase. Acts by inhibiting DNA gyrase at an early step, prior to (or at the step of) binding of DNA by the gyrase. It protects cells against toxins that target DNA gyrase, by inhibiting activity of these toxins and reducing the formation of lethal double-strand breaks in the cell. This is DNA gyrase inhibitor from Citrobacter rodentium (strain ICC168) (Citrobacter freundii biotype 4280).